The primary structure comprises 355 residues: Cyclic nucleotide-gated potassium channel RHE_CH03180 (355 aa).

The Cytoplasmic portion of the chain corresponds to 1–12; the sequence is MSAVPFSKISTP. The chain crosses the membrane as a helical span at residues 13-30; that stretch reads LNALFATIGLLVVAALTT. Residues 31–38 lie on the Periplasmic side of the membrane; that stretch reads QGLTGQER. Residues 39-61 traverse the membrane as a helical segment; the sequence is LVFELLLAAIWLAYVLQLSGTLL. The Cytoplasmic portion of the chain corresponds to 62-73; the sequence is SRRRRLSGEMTA. A helical transmembrane segment spans residues 74 to 93; that stretch reads LVIDLLAVLVPAAAFLFVGS. A helical membrane pass occupies residues 94–111; that stretch reads RDRDLYCAIWLLKPLRDS. The Cytoplasmic portion of the chain corresponds to 112–128; sequence TFFRLLAKVVANESRNL. A helical membrane pass occupies residues 129–149; the sequence is LGVTSVFGIVLFGAALAGYII. Residues 150 to 160 are Periplasmic-facing; the sequence is ERDVQPDKFGS. Residues 161–179 constitute an intramembrane region (pore-forming); that stretch reads IPQAMWWAVVTLSTTGYGD. A Selectivity filter motif is present at residues 174 to 179; it reads TTGYGD. The Periplasmic segment spans residues 180 to 184; sequence EIPQS. Residues 185–209 traverse the membrane as a helical segment; the sequence is LAGRVLAGLVMMSGIGIFALWAGIL. Topologically, residues 210 to 355 are cytoplasmic; sequence ATGFYEEVRR…LERRGGPPKE (146 aa). 3',5'-cyclic AMP-binding positions include 297-298, 307-308, and R348; these read GE and RS.

It belongs to the potassium channel family. In terms of assembly, homotetramer.

The protein resides in the cell membrane. In terms of biological role, cyclic nucleotide-regulated potassium channel activated by cAMP. The chain is Cyclic nucleotide-gated potassium channel RHE_CH03180 from Rhizobium etli (strain ATCC 51251 / DSM 11541 / JCM 21823 / NBRC 15573 / CFN 42).